The chain runs to 130 residues: Insulin-like growth factor 1 (130 aa).

The signal sequence occupies residues 1–25; it reads MHAVSSSHLFYLAFCLLVLTSSATA. Residues 26 to 54 are b; the sequence is GPETLCGAELVDALQFVCGDRGFYFNKPT. Cystine bridges form between C31–C73, C43–C86, and C72–C77. The c stretch occupies residues 55-66; sequence GYGSSSRRAPQT. The interval 67–87 is a; sequence GIVDECCFRSCDLRRLEMYCA. The d stretch occupies residues 88–95; sequence PLKPAKSA. Positions 96 to 130 are cleaved as a propeptide — e peptide; sequence RSVRAQRHTDMPKTQKEVHLKNASRGSAGNKNYRM. The interval 97-130 is disordered; it reads SVRAQRHTDMPKTQKEVHLKNASRGSAGNKNYRM. The segment covering 102–115 has biased composition (basic and acidic residues); sequence RHTDMPKTQKEVHL. The span at 119-130 shows a compositional bias: polar residues; it reads SRGSAGNKNYRM.

The protein belongs to the insulin family. In terms of assembly, forms a ternary complex with IGFR1 and ITGAV:ITGB3. Forms a ternary complex with IGFR1 and ITGA6:ITGB4. Forms a ternary complex with IGFBP3 and ALS.

Its subcellular location is the secreted. Functionally, the insulin-like growth factors, isolated from plasma, are structurally and functionally related to insulin but have a much higher growth-promoting activity. May be a physiological regulator of [1-14C]-2-deoxy-D-glucose (2DG) transport and glycogen synthesis in osteoblasts. Stimulates glucose transport in bone-derived osteoblastic (PyMS) cells and is effective at much lower concentrations than insulin, not only regarding glycogen and DNA synthesis but also with regard to enhancing glucose uptake. May play a role in synapse maturation. Ca(2+)-dependent exocytosis of IGF1 is required for sensory perception of smell in the olfactory bulb. Acts as a ligand for IGF1R. Binds to the alpha subunit of IGF1R, leading to the activation of the intrinsic tyrosine kinase activity which autophosphorylates tyrosine residues in the beta subunit thus initiating a cascade of down-stream signaling events leading to activation of the PI3K-AKT/PKB and the Ras-MAPK pathways. Binds to integrins ITGAV:ITGB3 and ITGA6:ITGB4. Its binding to integrins and subsequent ternary complex formation with integrins and IGFR1 are essential for IGF1 signaling. Induces the phosphorylation and activation of IGFR1, MAPK3/ERK1, MAPK1/ERK2 and AKT1. As part of the MAPK/ERK signaling pathway, acts as a negative regulator of apoptosis in cardiomyocytes via promotion of STUB1/CHIP-mediated ubiquitination and degradation of ICER-type isoforms of CREM. The chain is Insulin-like growth factor 1 from Cavia porcellus (Guinea pig).